The following is a 396-amino-acid chain: 1-deoxy-D-xylulose 5-phosphate reductoisomerase (396 aa).

The NADPH site is built by Thr15, Gly16, Ser17, Ile18, Gly41, and Asn129. Lys130 contributes to the 1-deoxy-D-xylulose 5-phosphate binding site. NADPH is bound at residue Glu131. Residue Asp155 participates in Mn(2+) binding. Residues Ser156, Glu157, Ser182, and His205 each coordinate 1-deoxy-D-xylulose 5-phosphate. Mn(2+) is bound at residue Glu157. Residue Gly211 participates in NADPH binding. Residues Ser218, Asn223, Lys224, and Glu227 each contribute to the 1-deoxy-D-xylulose 5-phosphate site. Glu227 is a Mn(2+) binding site.

This sequence belongs to the DXR family. Requires Mg(2+) as cofactor. It depends on Mn(2+) as a cofactor.

The catalysed reaction is 2-C-methyl-D-erythritol 4-phosphate + NADP(+) = 1-deoxy-D-xylulose 5-phosphate + NADPH + H(+). It participates in isoprenoid biosynthesis; isopentenyl diphosphate biosynthesis via DXP pathway; isopentenyl diphosphate from 1-deoxy-D-xylulose 5-phosphate: step 1/6. Catalyzes the NADPH-dependent rearrangement and reduction of 1-deoxy-D-xylulose-5-phosphate (DXP) to 2-C-methyl-D-erythritol 4-phosphate (MEP). The polypeptide is 1-deoxy-D-xylulose 5-phosphate reductoisomerase (Xanthomonas campestris pv. campestris (strain B100)).